Consider the following 394-residue polypeptide: Elongation factor Tu (394 aa).

The tr-type G domain occupies 10–204 (KPHVNVGTIG…ALDSYIPEPE (195 aa)). A G1 region spans residues 19–26 (GHVDHGKT). 19–26 (GHVDHGKT) serves as a coordination point for GTP. Residue threonine 26 participates in Mg(2+) binding. The interval 60–64 (GITIS) is G2. The segment at 81-84 (DCPG) is G3. GTP is bound by residues 81–85 (DCPGH) and 136–139 (NKCD). Residues 136-139 (NKCD) form a G4 region. A G5 region spans residues 174–176 (SAL).

It belongs to the TRAFAC class translation factor GTPase superfamily. Classic translation factor GTPase family. EF-Tu/EF-1A subfamily. In terms of assembly, monomer.

The protein resides in the cytoplasm. It carries out the reaction GTP + H2O = GDP + phosphate + H(+). GTP hydrolase that promotes the GTP-dependent binding of aminoacyl-tRNA to the A-site of ribosomes during protein biosynthesis. This is Elongation factor Tu from Alteromonas mediterranea (strain DSM 17117 / CIP 110805 / LMG 28347 / Deep ecotype).